The following is a 138-amino-acid chain: Protein PsiE homolog (138 aa).

Transmembrane regions (helical) follow at residues 12–34, 56–76, 84–104, and 109–129; these read YLLQ…ALLI, YEML…ALII, HFPL…LIII, and AIST…FFIA.

The protein belongs to the PsiE family.

The protein resides in the cell membrane. The chain is Protein PsiE homolog from Bacillus subtilis (strain 168).